Reading from the N-terminus, the 301-residue chain is Probable alpha-L-glutamate ligase (301 aa).

The region spanning 104 to 287 is the ATP-grasp domain; it reads LQLLSRKGIG…VADMIFEFIE (184 aa). ATP is bound by residues lysine 141, 178–179, aspartate 187, and 211–213; these read EF and RSN. Positions 248, 260, and 262 each coordinate Mg(2+). Mn(2+)-binding residues include aspartate 248, glutamate 260, and asparagine 262.

It belongs to the RimK family. Requires Mg(2+) as cofactor. The cofactor is Mn(2+).

This Vibrio atlanticus (strain LGP32) (Vibrio splendidus (strain Mel32)) protein is Probable alpha-L-glutamate ligase.